The primary structure comprises 378 residues: Ribosomal RNA large subunit methyltransferase G (378 aa).

It belongs to the methyltransferase superfamily. RlmG family.

The protein resides in the cytoplasm. The catalysed reaction is guanosine(1835) in 23S rRNA + S-adenosyl-L-methionine = N(2)-methylguanosine(1835) in 23S rRNA + S-adenosyl-L-homocysteine + H(+). Functionally, specifically methylates the guanine in position 1835 (m2G1835) of 23S rRNA. This is Ribosomal RNA large subunit methyltransferase G from Escherichia coli O139:H28 (strain E24377A / ETEC).